The sequence spans 612 residues: Dihydroxy-acid dehydratase (612 aa).

Residue Asp-81 participates in Mg(2+) binding. Cys-122 is a [2Fe-2S] cluster binding site. 2 residues coordinate Mg(2+): Asp-123 and Lys-124. An N6-carboxylysine modification is found at Lys-124. Position 193 (Cys-193) interacts with [2Fe-2S] cluster. Residue Glu-489 coordinates Mg(2+). The active-site Proton acceptor is Ser-515.

It belongs to the IlvD/Edd family. In terms of assembly, homodimer. The cofactor is [2Fe-2S] cluster. Mg(2+) serves as cofactor.

It catalyses the reaction (2R)-2,3-dihydroxy-3-methylbutanoate = 3-methyl-2-oxobutanoate + H2O. The enzyme catalyses (2R,3R)-2,3-dihydroxy-3-methylpentanoate = (S)-3-methyl-2-oxopentanoate + H2O. It functions in the pathway amino-acid biosynthesis; L-isoleucine biosynthesis; L-isoleucine from 2-oxobutanoate: step 3/4. Its pathway is amino-acid biosynthesis; L-valine biosynthesis; L-valine from pyruvate: step 3/4. Functions in the biosynthesis of branched-chain amino acids. Catalyzes the dehydration of (2R,3R)-2,3-dihydroxy-3-methylpentanoate (2,3-dihydroxy-3-methylvalerate) into 2-oxo-3-methylpentanoate (2-oxo-3-methylvalerate) and of (2R)-2,3-dihydroxy-3-methylbutanoate (2,3-dihydroxyisovalerate) into 2-oxo-3-methylbutanoate (2-oxoisovalerate), the penultimate precursor to L-isoleucine and L-valine, respectively. In Stutzerimonas stutzeri (strain A1501) (Pseudomonas stutzeri), this protein is Dihydroxy-acid dehydratase.